The primary structure comprises 99 residues: Protein E7 (99 aa).

Residues 1 to 41 (MHGEITTLQDYVLDLEPEATDLYCYEQLCDSSEEEEDTIDG) form an E7 terminal domain region. Residues 22–26 (LYCYE) carry the LXCXE motif; interaction with host RB1 and TMEM173/STING motif. The segment at 59-95 (CCKCEATLRLCVQSTHIDIRKLEDLLMGTFGIVCPGC) is a zinc-finger region. Residues 77 to 85 (IRKLEDLLM) carry the Nuclear export signal motif.

Belongs to the papillomaviridae E7 protein family. In terms of assembly, homodimer. Homooligomer. Interacts with host RB1; this interaction induces dissociation of RB1-E2F1 complex thereby disrupting RB1 activity. Interacts with host EP300; this interaction represses EP300 transcriptional activity. Interacts with protein E2; this interaction inhibits E7 oncogenic activity. Interacts with host TMEM173/STING; this interaction impairs the ability of TMEM173/STING to sense cytosolic DNA and promote the production of type I interferon (IFN-alpha and IFN-beta). Post-translationally, highly phosphorylated.

The protein resides in the host cytoplasm. Its subcellular location is the host nucleus. Plays a role in viral genome replication by driving entry of quiescent cells into the cell cycle. Stimulation of progression from G1 to S phase allows the virus to efficiently use the cellular DNA replicating machinery to achieve viral genome replication. E7 protein has both transforming and trans-activating activities. Induces the disassembly of the E2F1 transcription factor from RB1, with subsequent transcriptional activation of E2F1-regulated S-phase genes. Interferes with host histone deacetylation mediated by HDAC1 and HDAC2, leading to transcription activation. Also plays a role in the inhibition of both antiviral and antiproliferative functions of host interferon alpha. Interaction with host TMEM173/STING impairs the ability of TMEM173/STING to sense cytosolic DNA and promote the production of type I interferon (IFN-alpha and IFN-beta). The sequence is that of Protein E7 from Human papillomavirus 35.